Reading from the N-terminus, the 287-residue chain is Bifunctional protein FolD (287 aa).

NADP(+) is bound by residues 160–162 (GRS), S189, and T230.

Belongs to the tetrahydrofolate dehydrogenase/cyclohydrolase family. In terms of assembly, homodimer.

It catalyses the reaction (6R)-5,10-methylene-5,6,7,8-tetrahydrofolate + NADP(+) = (6R)-5,10-methenyltetrahydrofolate + NADPH. The enzyme catalyses (6R)-5,10-methenyltetrahydrofolate + H2O = (6R)-10-formyltetrahydrofolate + H(+). Its pathway is one-carbon metabolism; tetrahydrofolate interconversion. Catalyzes the oxidation of 5,10-methylenetetrahydrofolate to 5,10-methenyltetrahydrofolate and then the hydrolysis of 5,10-methenyltetrahydrofolate to 10-formyltetrahydrofolate. The polypeptide is Bifunctional protein FolD (Chlamydia caviae (strain ATCC VR-813 / DSM 19441 / 03DC25 / GPIC) (Chlamydophila caviae)).